We begin with the raw amino-acid sequence, 256 residues long: UPF0246 protein HRM2_41860 (256 aa).

Belongs to the UPF0246 family.

This chain is UPF0246 protein HRM2_41860, found in Desulforapulum autotrophicum (strain ATCC 43914 / DSM 3382 / VKM B-1955 / HRM2) (Desulfobacterium autotrophicum).